The sequence spans 938 residues: Isoleucine--tRNA ligase (938 aa).

Residues 58-68 carry the 'HIGH' region motif; sequence PYANGSIHIGH. At Lys183 the chain carries N6-acetyllysine. Residue Glu561 coordinates L-isoleucyl-5'-AMP. Residues 602–606 carry the 'KMSKS' region motif; that stretch reads KMSKS. Lys605 contributes to the ATP binding site. Residues Cys901, Cys904, Cys921, and Cys924 each contribute to the Zn(2+) site.

The protein belongs to the class-I aminoacyl-tRNA synthetase family. IleS type 1 subfamily. In terms of assembly, monomer. Zn(2+) is required as a cofactor.

The protein resides in the cytoplasm. The catalysed reaction is tRNA(Ile) + L-isoleucine + ATP = L-isoleucyl-tRNA(Ile) + AMP + diphosphate. Functionally, catalyzes the attachment of isoleucine to tRNA(Ile). As IleRS can inadvertently accommodate and process structurally similar amino acids such as valine, to avoid such errors it has two additional distinct tRNA(Ile)-dependent editing activities. One activity is designated as 'pretransfer' editing and involves the hydrolysis of activated Val-AMP. The other activity is designated 'posttransfer' editing and involves deacylation of mischarged Val-tRNA(Ile). The protein is Isoleucine--tRNA ligase of Escherichia fergusonii (strain ATCC 35469 / DSM 13698 / CCUG 18766 / IAM 14443 / JCM 21226 / LMG 7866 / NBRC 102419 / NCTC 12128 / CDC 0568-73).